We begin with the raw amino-acid sequence, 907 residues long: Epidermal growth factor receptor substrate 15-like 1 (907 aa).

Alanine 2 is subject to N-acetylalanine. The EH 1 domain occupies 15 to 104 (GNPLYESYYK…SLTMPPPKFH (90 aa)). Residues 15–368 (GNPLYESYYK…PSERGTPIPD (354 aa)) form an interaction with DAB2 region. An EF-hand 1 domain is found at 48–83 (LSDIILGKIWDLADPEGKGFLDKQGFYVALRLVACA). Tyrosine 74 bears the Phosphotyrosine mark. A phosphoserine mark is found at serine 107 and serine 108. An EH 2 domain is found at 127 to 215 (EKAKFDGIFE…PPLIPPSKRK (89 aa)). The EF-hand 2 domain maps to 159-194 (LPLDVLGRVWDLSDIDKDGHLDRDEFAVAMHLVYRA). Positions 172, 174, 176, 178, and 183 each coordinate Ca(2+). Serine 229, serine 244, serine 253, serine 255, and serine 259 each carry phosphoserine. Residues 229–260 (SPPPKDSLRSTPSHGSVSSLNSTGSLSPKHSV) form a disordered region. Positions 241–255 (SHGSVSSLNSTGSLS) are enriched in low complexity. EF-hand domains follow at residues 272–307 (ADKM…SGLT) and 308–341 (QNLL…IQQK). The region spanning 273–363 (DKMRFDEIFL…PDMVPPSERG (91 aa)) is the EH 3 domain. Serine 360 is modified (phosphoserine). A Phosphothreonine modification is found at threonine 364. A phosphoserine mark is found at serine 369 and serine 375. Residues 384 to 551 (LDDISQEIAQ…RSKLSQLQES (168 aa)) adopt a coiled-coil conformation. Serine 558 is modified (phosphoserine). At tyrosine 562 the chain carries Phosphotyrosine. Serine 610 is modified (phosphoserine). The tract at residues 611 to 860 (QELHPDPFQA…SSSGFADFTS (250 aa)) is disordered. A compositionally biased stretch (basic and acidic residues) spans 622–636 (DPFKSDPFKGADPFK). The segment covering 643-652 (DPFSEQQTAA) has biased composition (polar residues). 5 positions are modified to phosphoserine: serine 664, serine 670, serine 695, serine 715, and serine 732. Over residues 682-696 (NDPFTSDPFTKNPSL) the composition is skewed to polar residues. Residues 703–743 (FESSDPFSSSSISSKGSDPFGTLDPFGSSSFSSAEGFADFS) show a composition bias toward low complexity. Over residues 776 to 790 (ALPPKKPAPPRPKPP) the composition is skewed to pro residues. Position 791 is a phosphoserine (serine 791). Polar residues predominate over residues 791–802 (SGQSTPVSQLGS). Residue threonine 795 is modified to Phosphothreonine. Residues 840-853 (APSSSAKPPKTSSS) are compositionally biased toward low complexity. 2 UIM domains span residues 863–882 (NEEQ…EQER) and 889–907 (QEQE…DMPA).

As to quaternary structure, interacts with EPS15, AGFG1/HRB and AGFG2/HRBL. Associates with the clathrin-associated adapter protein complex 2 (AP-2). Interacts with FCHO1. Interacts with FCHO2. Interacts (via EH domains) with DAB2. Interacts with UBQLN1 (via ubiquitin-like domain). Interacts with CAVIN3 (via leucine-zipper domain). Interacts with REPS2. Post-translationally, phosphorylated on tyrosine residues by EGFR.

The protein resides in the cell membrane. It is found in the nucleus. The protein localises to the membrane. It localises to the coated pit. Seems to be a constitutive component of clathrin-coated pits that is required for receptor-mediated endocytosis. Involved in endocytosis of integrin beta-1 (ITGB1) and transferrin receptor (TFR); internalization of ITGB1 as DAB2-dependent cargo but not TFR seems to require association with DAB2. This Mus musculus (Mouse) protein is Epidermal growth factor receptor substrate 15-like 1 (Eps15l1).